The sequence spans 217 residues: ATP phosphoribosyltransferase (217 aa).

It belongs to the ATP phosphoribosyltransferase family. Short subfamily. In terms of assembly, heteromultimer composed of HisG and HisZ subunits.

It localises to the cytoplasm. It catalyses the reaction 1-(5-phospho-beta-D-ribosyl)-ATP + diphosphate = 5-phospho-alpha-D-ribose 1-diphosphate + ATP. The protein operates within amino-acid biosynthesis; L-histidine biosynthesis; L-histidine from 5-phospho-alpha-D-ribose 1-diphosphate: step 1/9. Catalyzes the condensation of ATP and 5-phosphoribose 1-diphosphate to form N'-(5'-phosphoribosyl)-ATP (PR-ATP). Has a crucial role in the pathway because the rate of histidine biosynthesis seems to be controlled primarily by regulation of HisG enzymatic activity. This chain is ATP phosphoribosyltransferase, found in Polaromonas naphthalenivorans (strain CJ2).